A 78-amino-acid chain; its full sequence is Exodeoxyribonuclease 7 small subunit (78 aa).

The protein belongs to the XseB family. As to quaternary structure, heterooligomer composed of large and small subunits.

It localises to the cytoplasm. It catalyses the reaction Exonucleolytic cleavage in either 5'- to 3'- or 3'- to 5'-direction to yield nucleoside 5'-phosphates.. Bidirectionally degrades single-stranded DNA into large acid-insoluble oligonucleotides, which are then degraded further into small acid-soluble oligonucleotides. This Pediococcus pentosaceus (strain ATCC 25745 / CCUG 21536 / LMG 10740 / 183-1w) protein is Exodeoxyribonuclease 7 small subunit.